A 192-amino-acid polypeptide reads, in one-letter code: Adenylate kinase (192 aa).

10-15 (GAGKGT) provides a ligand contact to ATP. Residues 30–59 (STGDMLRAAVAQATEVGKRAKAVMDAGQLV) form an NMP region. Residues Thr-31, Arg-36, 57 to 59 (QLV), 85 to 88 (GYPR), and Gln-92 each bind AMP. The segment at 126–142 (NRVAETVAAGGTVRSDD) is LID. Arg-127 lines the ATP pocket. AMP-binding residues include Arg-139 and Arg-150. An ATP-binding site is contributed by Ala-178.

This sequence belongs to the adenylate kinase family. Monomer.

Its subcellular location is the cytoplasm. It carries out the reaction AMP + ATP = 2 ADP. Its pathway is purine metabolism; AMP biosynthesis via salvage pathway; AMP from ADP: step 1/1. Its function is as follows. Catalyzes the reversible transfer of the terminal phosphate group between ATP and AMP. Plays an important role in cellular energy homeostasis and in adenine nucleotide metabolism. This Sinorhizobium medicae (strain WSM419) (Ensifer medicae) protein is Adenylate kinase.